Consider the following 61-residue polypeptide: MDPNCSCATGDSCTCASSCKCKECKCTSCKKSCCSCCPAGCTKCAQGCICKGASDKCSCCA.

An N-acetylmethionine modification is found at Met1. Residues 1–29 (MDPNCSCATGDSCTCASSCKCKECKCTSC) are beta. Positions 5, 7, 13, 15, 19, 21, 24, 26, 29, 33, 34, 36, 37, 41, 44, 48, 50, 57, 59, and 60 each coordinate a divalent metal cation. Residues 30-61 (KKSCCSCCPAGCTKCAQGCICKGASDKCSCCA) are alpha.

This sequence belongs to the metallothionein superfamily. Type 1 family. Monomer.

In terms of biological role, metallothioneins have a high content of cysteine residues that bind various heavy metals; these proteins are transcriptionally regulated by both heavy metals and glucocorticoids. This is Metallothionein-2B from Oryctolagus cuniculus (Rabbit).